The primary structure comprises 431 residues: Histidine--tRNA ligase (431 aa).

Belongs to the class-II aminoacyl-tRNA synthetase family. As to quaternary structure, homodimer.

It is found in the cytoplasm. The enzyme catalyses tRNA(His) + L-histidine + ATP = L-histidyl-tRNA(His) + AMP + diphosphate + H(+). The sequence is that of Histidine--tRNA ligase from Limosilactobacillus fermentum (strain NBRC 3956 / LMG 18251) (Lactobacillus fermentum).